Here is a 159-residue protein sequence, read N- to C-terminus: Dynein 18 kDa light chain, flagellar outer arm (159 aa).

EF-hand domains are found at residues 18-53 (EEMD…LGQN), 54-89 (PTEE…NKQM), and 129-159 (ELTV…ALLS). Ca(2+) contacts are provided by aspartate 31, aspartate 33, serine 35, threonine 37, glutamate 42, aspartate 67, aspartate 69, serine 71, cysteine 73, and glutamate 78.

Consists of at least 3 heavy chains (alpha, beta and gamma), 2 intermediate chains and 8 light chains.

Its subcellular location is the cell projection. It localises to the cilium. The protein localises to the flagellum. In terms of biological role, may be involved in the calcium-mediated regulation of dynein motor function. Binds 1 mole of calcium. This chain is Dynein 18 kDa light chain, flagellar outer arm, found in Chlamydomonas reinhardtii (Chlamydomonas smithii).